The sequence spans 278 residues: HTH-type transcriptional activator RhaS (278 aa).

Residues 174-272 (NLLLAWLEDH…NWSPRDIRQG (99 aa)) enclose the HTH araC/xylS-type domain. 2 consecutive DNA-binding regions (H-T-H motif) follow at residues 191-212 (DAVADQFSLSLRTLHRQLKQQT) and 239-262 (VTDIAYRCGFSDSNHFSTLFRREF).

As to quaternary structure, binds DNA as a dimer.

It is found in the cytoplasm. Functionally, activates expression of the rhaBAD and rhaT operons. This is HTH-type transcriptional activator RhaS from Escherichia coli O81 (strain ED1a).